The chain runs to 406 residues: 1H-pyrrole-2-carbonyl-[peptidyl-carrier protein] brominase (406 aa).

10 residues coordinate FAD: A17, E36, R42, H44, I45, S48, R101, V124, D291, and V304.

Belongs to the flavin-dependent halogenase family.

It catalyses the reaction (1H-pyrrole-2-carbonyl)-[peptidyl-carrier protein] + 3 bromide + 3 FADH2 + 3 O2 = (3,4,5-tribromo-1H-pyrrole-2-carbonyl)-[peptidyl-carrier protein] + 3 FAD + 6 H2O. It carries out the reaction (1H-pyrrole-2-carbonyl)-[peptidyl-carrier protein] + bromide + FADH2 + O2 = (5-bromo-1H-pyrrole-2-carbonyl)-[peptidyl-carrier protein] + FAD + 2 H2O. The catalysed reaction is (5-bromo-1H-pyrrole-2-carbonyl)-[peptidyl-carrier protein] + bromide + FADH2 + O2 = (4,5-dibromo-1H-pyrrole-2-carbonyl)-[peptidyl-carrier protein] + FAD + 2 H2O. The enzyme catalyses (4,5-dibromo-1H-pyrrole-2-carbonyl)-[peptidyl-carrier protein] + bromide + FADH2 + O2 = (3,4,5-tribromo-1H-pyrrole-2-carbonyl)-[peptidyl-carrier protein] + FAD + 2 H2O. Brominase involved in the biosynthesis of polybrominated aromatic organic compounds. Catalyzes three successive rounds of bromination of pyrrolyl-S-Bmp1 to produce mono-, di- and tribromopyrrolyl-S-Bmp1. This Pseudoalteromonas luteoviolacea (strain 2ta16) protein is 1H-pyrrole-2-carbonyl-[peptidyl-carrier protein] brominase.